The sequence spans 2312 residues: Protein Ycf2 (2312 aa).

3 disordered regions span residues 170 to 191, 223 to 253, and 942 to 1009; these read SSQL…GTED, TEIE…EMNN, and KRKK…KRKE. Residues 232-242 are compositionally biased toward low complexity; it reads KGLSGSSSKSR. Composition is skewed to basic and acidic residues over residues 243-252 and 950-1007; these read LFTEGEKEMN and KRKE…PEKR. 1439–1446 provides a ligand contact to ATP; that stretch reads GSIGSGRS. Disordered regions lie at residues 1513–1532, 1857–1983, and 2050–2166; these read YEDR…YEPG, LVGS…LLRP, and PAEE…DGFS. Residues 1863–1963 are compositionally biased toward acidic residues; it reads TEEEVEGTEE…GEGTEDEEVE (101 aa). The span at 1964–1976 shows a compositional bias: basic and acidic residues; sequence GTEKDSSQFDNDR. 2 stretches are compositionally biased toward acidic residues: residues 2050 to 2067 and 2074 to 2149; these read PAEE…EALE and GEEE…ENDS.

It belongs to the Ycf2 family.

Its subcellular location is the plastid. It localises to the chloroplast stroma. Its function is as follows. Probable ATPase of unknown function. Its presence in a non-photosynthetic plant (Epifagus virginiana) and experiments in tobacco indicate that it has an essential function which is probably not related to photosynthesis. In Oenothera parviflora (Small-flowered evening primrose), this protein is Protein Ycf2.